Reading from the N-terminus, the 104-residue chain is Large ribosomal subunit protein eL30 (104 aa).

Belongs to the eukaryotic ribosomal protein eL30 family.

The chain is Large ribosomal subunit protein eL30 (rpl30e) from Sulfolobus acidocaldarius (strain ATCC 33909 / DSM 639 / JCM 8929 / NBRC 15157 / NCIMB 11770).